Here is a 135-residue protein sequence, read N- to C-terminus: Large ribosomal subunit protein uL16c (135 aa).

Belongs to the universal ribosomal protein uL16 family. Part of the 50S ribosomal subunit.

The protein resides in the plastid. Its subcellular location is the chloroplast. The protein is Large ribosomal subunit protein uL16c of Populus alba (White poplar).